The primary structure comprises 170 residues: Putative beta-eliminating lyase-like protein (170 aa).

K32 is modified (N6-(pyridoxal phosphate)lysine).

This sequence belongs to the beta-eliminating lyase family. The cofactor is pyridoxal 5'-phosphate.

In Dictyostelium discoideum (Social amoeba), this protein is Putative beta-eliminating lyase-like protein.